The following is a 476-amino-acid chain: Bifunctional protein HldE (476 aa).

The interval 1 to 318 (MKPILPDYNS…AEAVHGSQDT (318 aa)) is ribokinase. 195 to 198 (NMKE) is a binding site for ATP. Residue D264 is part of the active site. Residues 344–476 (MTNGCFDILH…IINAIKGGKG (133 aa)) are cytidylyltransferase.

The protein in the N-terminal section; belongs to the carbohydrate kinase PfkB family. In the C-terminal section; belongs to the cytidylyltransferase family. In terms of assembly, homodimer.

It catalyses the reaction D-glycero-beta-D-manno-heptose 7-phosphate + ATP = D-glycero-beta-D-manno-heptose 1,7-bisphosphate + ADP + H(+). The catalysed reaction is D-glycero-beta-D-manno-heptose 1-phosphate + ATP + H(+) = ADP-D-glycero-beta-D-manno-heptose + diphosphate. It functions in the pathway nucleotide-sugar biosynthesis; ADP-L-glycero-beta-D-manno-heptose biosynthesis; ADP-L-glycero-beta-D-manno-heptose from D-glycero-beta-D-manno-heptose 7-phosphate: step 1/4. The protein operates within nucleotide-sugar biosynthesis; ADP-L-glycero-beta-D-manno-heptose biosynthesis; ADP-L-glycero-beta-D-manno-heptose from D-glycero-beta-D-manno-heptose 7-phosphate: step 3/4. Its pathway is bacterial outer membrane biogenesis; LPS core biosynthesis. Functionally, catalyzes the phosphorylation of D-glycero-D-manno-heptose 7-phosphate at the C-1 position to selectively form D-glycero-beta-D-manno-heptose-1,7-bisphosphate. In terms of biological role, catalyzes the ADP transfer from ATP to D-glycero-beta-D-manno-heptose 1-phosphate, yielding ADP-D-glycero-beta-D-manno-heptose. This Vibrio parahaemolyticus serotype O3:K6 (strain RIMD 2210633) protein is Bifunctional protein HldE.